A 314-amino-acid chain; its full sequence is Probable UDP-sugar transporter protein SLC35A4 (314 aa).

The Cytoplasmic segment spans residues 1–20; the sequence is MIAISADESPESSSPALRLR. Residues 21–41 traverse the membrane as a helical segment; that stretch reads WLFLLLLLVLIYGSHAPLLSL. The Lumenal segment spans residues 42 to 54; sequence CKTQAQIPFSASS. The chain crosses the membrane as a helical span at residues 55 to 75; sequence CVLLIETSKLFISFASLLASG. The Cytoplasmic segment spans residues 76–88; the sequence is SVSTLRISISMTT. Residues 89 to 109 traverse the membrane as a helical segment; it reads ASPYAVPAVLYAFNNHLVVFM. Over 110-145 the chain is Lumenal; that stretch reads QAYMDPSSFQVLSNLKIASTALLYTSCLGKRLHRRQ. A helical membrane pass occupies residues 146–166; sequence WFAMGLLVSAGVSHSCFSYDL. The Cytoplasmic segment spans residues 167–175; it reads EGKRETAVY. A helical membrane pass occupies residues 176-196; the sequence is ITSWGLLLVLVYCFVSGLAAV. At 197-206 the chain is on the lumenal side; the sequence is YTERVLKSQR. A helical transmembrane segment spans residues 207–227; that stretch reads LPLSMQNLFLYTFGVVVNLAS. At 228–242 the chain is on the cytoplasmic side; sequence HLSGGEQKGFFEGYS. The helical transmembrane segment at 243–263 threads the bilayer; that stretch reads AVVWVIVAGQVANGLLMSVVM. Residues 264 to 267 lie on the Lumenal side of the membrane; the sequence is KHGT. Residues 268–290 form a helical membrane-spanning segment; it reads GITRLFVISSAMLVNAVLSWGIL. Over 291-314 the chain is Cytoplasmic; it reads GVQLTGYFLFPVVLIGWAVYLYYT.

The protein belongs to the nucleotide-sugar transporter family. SLC35A subfamily.

Its subcellular location is the golgi apparatus membrane. It carries out the reaction CDP-L-ribitol(in) + CDP(out) = CDP-L-ribitol(out) + CDP(in). In terms of biological role, mediates the transport of CDP-ribitol. Does not exhibit CMP-sialic acid, UDP-galactose and UDP-N-acetylglucosamine transport activity. The polypeptide is Probable UDP-sugar transporter protein SLC35A4 (Danio rerio (Zebrafish)).